The sequence spans 270 residues: Putative phosphoenolpyruvate synthase regulatory protein (270 aa).

Position 150-157 (150-157 (GVSRCGKT)) interacts with ADP.

The protein belongs to the pyruvate, phosphate/water dikinase regulatory protein family. PSRP subfamily.

The catalysed reaction is [pyruvate, water dikinase] + ADP = [pyruvate, water dikinase]-phosphate + AMP + H(+). It catalyses the reaction [pyruvate, water dikinase]-phosphate + phosphate + H(+) = [pyruvate, water dikinase] + diphosphate. Its function is as follows. Bifunctional serine/threonine kinase and phosphorylase involved in the regulation of the phosphoenolpyruvate synthase (PEPS) by catalyzing its phosphorylation/dephosphorylation. The sequence is that of Putative phosphoenolpyruvate synthase regulatory protein from Shewanella baltica (strain OS223).